Here is a 1167-residue protein sequence, read N- to C-terminus: MKVNRETKRLYVGGLSQDISEADLQNQFSRFGEVSDVEIITRKDDQGNPQKVFAYINISVAEADLKKCMSVLNKTKWKGGTLQIQLAKESFLHRLAQEREAAKAKKEESTTGNANLLEKTGGVDFHMKAVPGTEVPGHKNWVVSKFGRVLPVLHLKNQHKRKIIKYDPSKYCHNLKKIGEDFSNTIPISSLTWELEGGNDPMSKKRRGEFSDFHGPPKKIIKVQKDESSTGSLAMSTRPRRVIERPPLTQQQAAQKRTCDSITPSKSSPVPVSDTQKLKNLPFKTSGLETAKKRNSISDDDTDSEDELRMMIAKEENLQRTTQPSINESESDPFEVVRDDFKSGVHKLHSLIGLGIKNRVSCHDSDDDIMRNDREYDSGDTDEIIAMKKNVAKVKNSTEFSQMEKSTKKTSFKNRENCELSDHCIKLQKRKSNVESALSHGLKSLNRKSPSHSSSSEDADSASELADSEGGEEYNAMMKNCLRVNLTLADLEQLAGSDLKVPNEDTKSDGPETTTQCKFDRGSKSPKTPTGLRRGRQCIRPAEIVASLLEGEENTCGKQKPKENNLKPKFQAFKGVGCLYEKESMKKSLKDSVASNNKDQNSMKHEDPSIISMEDGSPYVNGSLGEVTPCQHAKKANGPNYIQPQKRQTTFESQDRKAVSPSSSEKRSKNPISRPLEGKKSLSLSAKTHNIGFDKDSCHSTTKTEASQEERSDSSGLTSLKKSPKVSSKDTREIKTDFSLSISNSSDVSAKDKHAEDNEKRLAALEARQKAKEVQKKLVHNALANLDGHPEDKPTHIIFGSDSECETEETSTQEQSHPGEEWVKESMGKTSGKLFDSSDDDESDSEDDSNRFKIKPQFEGRAGQKLMDLQSHFGTDDRFRMDSRFLETDSEEEQEEVNEKKTAEEEELAEEKKKALNVVQSVLQINLSNSTNRGSVAAKKFKDIIHYDPTKQDHATYERKRDDKPKESKAKRKKKREEAEKLPEVSKEMYYNIAMDLKEIFQTTKYTSEKEEGTPWNEDCGKEKPEEIQDPAALTSDAEQPSGFTFSFFDSDTKDIKEETYRVETVKPGKIVWQEDPRLQDSSSEEEDVTEETDHRNSSPGEASLLEKETTRFFFFSKNDERLQGSDLFWRGVGSNMSRNSWEARTTNLRMDCRKKHKDAKRKMKPK.

The region spanning 8-89 is the RRM domain; the sequence is KRLYVGGLSQ…GTLQIQLAKE (82 aa). The interval 223 to 304 is disordered; the sequence is VQKDESSTGS…NSISDDDTDS (82 aa). Residue Lys-225 forms a Glycyl lysine isopeptide (Lys-Gly) (interchain with G-Cter in SUMO2) linkage. Polar residues predominate over residues 248 to 275; sequence LTQQQAAQKRTCDSITPSKSSPVPVSDT. 2 positions are modified to phosphoserine: Ser-268 and Ser-298. Thr-302 carries the post-translational modification Phosphothreonine. Ser-304 bears the Phosphoserine mark. Lys-314 participates in a covalent cross-link: Glycyl lysine isopeptide (Lys-Gly) (interchain with G-Cter in SUMO2). Phosphoserine occurs at positions 331 and 365. Tyr-376 bears the Phosphotyrosine mark. Position 378 is a phosphoserine (Ser-378). Thr-381 carries the post-translational modification Phosphothreonine. Ser-432 is subject to Phosphoserine. Disordered stretches follow at residues 435 to 470, 499 to 533, 590 to 908, 932 to 982, and 1006 to 1026; these read ESALSHGLKSLNRKSPSHSSSSEDADSASELADSEG, LKVPNEDTKSDGPETTTQCKFDRGSKSPKTPTGLR, KDSV…EEEL, NRGS…AEKL, and YTSEKEEGTPWNEDCGKEKPE. A compositionally biased stretch (acidic residues) spans 457–470; it reads EDADSASELADSEG. Over residues 501 to 510 the composition is skewed to basic and acidic residues; it reads VPNEDTKSDG. Residues 640-652 are compositionally biased toward polar residues; the sequence is NYIQPQKRQTTFE. Residues 653 to 668 show a composition bias toward basic and acidic residues; the sequence is SQDRKAVSPSSSEKRS. Phosphoserine is present on Ser-723. Over residues 727–736 the composition is skewed to basic and acidic residues; sequence SSKDTREIKT. Polar residues predominate over residues 738-748; it reads FSLSISNSSDV. Residues 749–776 are compositionally biased toward basic and acidic residues; the sequence is SAKDKHAEDNEKRLAALEARQKAKEVQK. Residues 753–779 are a coiled coil; that stretch reads KHAEDNEKRLAALEARQKAKEVQKKLV. Thr-795 bears the Phosphothreonine mark. A Phosphoserine modification is found at Ser-801. A compositionally biased stretch (basic and acidic residues) spans 817 to 827; the sequence is HPGEEWVKESM. Phosphoserine is present on residues Ser-837, Ser-838, Ser-843, and Ser-845. The span at 837 to 847 shows a compositional bias: acidic residues; it reads SSDDDESDSED. A compositionally biased stretch (basic and acidic residues) spans 874–887; sequence GTDDRFRMDSRFLE. Residues 886 to 924 adopt a coiled-coil conformation; the sequence is LETDSEEEQEEVNEKKTAEEEELAEEKKKALNVVQSVLQ. A Phosphothreonine modification is found at Thr-888. The residue at position 890 (Ser-890) is a Phosphoserine. Basic and acidic residues-rich tracts occupy residues 940 to 968 and 1007 to 1026; these read KFKDIIHYDPTKQDHATYERKRDDKPKES and TSEKEEGTPWNEDCGKEKPE. Ser-1036 is modified (phosphoserine). A Glycyl lysine isopeptide (Lys-Gly) (interchain with G-Cter in SUMO2) cross-link involves residue Lys-1057. Disordered stretches follow at residues 1071–1105 and 1145–1167; these read IVWQEDPRLQDSSSEEEDVTEETDHRNSSPGEASL and RTTNLRMDCRKKHKDAKRKMKPK. Phosphoserine is present on residues Ser-1082, Ser-1083, Ser-1084, and Ser-1099. Over residues 1153–1167 the composition is skewed to basic residues; sequence CRKKHKDAKRKMKPK.

Interacts with the GTP form of RRAGA, RRAGC and RRAGD. Interacts with NIP7. Interacts with DDX18; the interaction is RNA-dependent. Interacts with DDX47; the interaction is RNA-dependent. In terms of processing, phosphorylated. As to expression, expressed in various diffuse-type gastric cancers. Detected at lower levels in skeletal muscle.

The protein localises to the nucleus. Its subcellular location is the nucleolus. Plays an essential role in the survival of diffuse-type gastric cancer cells. Acts as a nucleolar anchoring protein for DDX47. May be involved in regulation of gene expression at the post-transcriptional level or in ribosome biogenesis in cancer cells. In Homo sapiens (Human), this protein is Nucleolar protein 8.